The following is a 320-amino-acid chain: Calnexin-independence factor 1 (320 aa).

Positions 16–36 (SAETSVGEKQPKRKRSEVRAE) are disordered.

The protein resides in the nucleus. It localises to the nucleolus. Its function is as follows. Induces a stably inheritable state of calnexin independence called the Cin state when overexpressed. The sequence is that of Calnexin-independence factor 1 (cif1) from Schizosaccharomyces pombe (strain 972 / ATCC 24843) (Fission yeast).